Consider the following 77-residue polypeptide: UPF0349 protein lwe2340 (77 aa).

Belongs to the UPF0349 family.

The polypeptide is UPF0349 protein lwe2340 (Listeria welshimeri serovar 6b (strain ATCC 35897 / DSM 20650 / CCUG 15529 / CIP 8149 / NCTC 11857 / SLCC 5334 / V8)).